A 428-amino-acid polypeptide reads, in one-letter code: Cytochrome c biogenesis protein CcsB (428 aa).

3 consecutive transmembrane segments (helical) span residues 14-34 (LRFA…GTFI), 72-92 (SFWF…CSFR), and 162-182 (IGPL…AYGS).

Belongs to the Ccs1/CcsB family. As to quaternary structure, may interact with CcsA.

It localises to the cellular thylakoid membrane. Its function is as follows. Required during biogenesis of c-type cytochromes (cytochrome c6 and cytochrome f) at the step of heme attachment. The sequence is that of Cytochrome c biogenesis protein CcsB from Prochlorococcus marinus (strain AS9601).